The following is a 212-amino-acid chain: Thymidylate kinase (212 aa).

10–17 (GPEGAGKT) serves as a coordination point for ATP.

Belongs to the thymidylate kinase family.

The catalysed reaction is dTMP + ATP = dTDP + ADP. In terms of biological role, phosphorylation of dTMP to form dTDP in both de novo and salvage pathways of dTTP synthesis. This is Thymidylate kinase from Bacillus licheniformis (strain ATCC 14580 / DSM 13 / JCM 2505 / CCUG 7422 / NBRC 12200 / NCIMB 9375 / NCTC 10341 / NRRL NRS-1264 / Gibson 46).